A 269-amino-acid chain; its full sequence is Phosphate import ATP-binding protein PstB (269 aa).

The ABC transporter domain occupies 14-253 (LSLENVSISY…EFNSTKKIFN (240 aa)). 46 to 53 (GPSGCGKS) provides a ligand contact to ATP.

This sequence belongs to the ABC transporter superfamily. Phosphate importer (TC 3.A.1.7) family. As to quaternary structure, the complex is composed of two ATP-binding proteins (PstB), two transmembrane proteins (PstC and PstA) and a solute-binding protein (PstS).

Its subcellular location is the cell inner membrane. It catalyses the reaction phosphate(out) + ATP + H2O = ADP + 2 phosphate(in) + H(+). Part of the ABC transporter complex PstSACB involved in phosphate import. Responsible for energy coupling to the transport system. This Prochlorococcus marinus (strain MIT 9312) protein is Phosphate import ATP-binding protein PstB.